The chain runs to 308 residues: Spermidine synthase 2 (308 aa).

Residues 17-254 enclose the PABS domain; it reads PGWFSEISPL…GVIGFMLCST (238 aa). Gln48 provides a ligand contact to S-adenosyl 3-(methylsulfanyl)propylamine. Tyr78 lines the putrescine pocket. Residues Gln79, Asp103, Glu123, 154-155, and Asp173 contribute to the S-adenosyl 3-(methylsulfanyl)propylamine site; that span reads DG. The active-site Proton acceptor is Asp173. Putrescine contacts are provided by residues 173–176 and Tyr242; that span reads DSSD.

This sequence belongs to the spermidine/spermine synthase family.

The enzyme catalyses S-adenosyl 3-(methylsulfanyl)propylamine + putrescine = S-methyl-5'-thioadenosine + spermidine + H(+). It functions in the pathway amine and polyamine biosynthesis; spermidine biosynthesis; spermidine from putrescine: step 1/1. This Hyoscyamus niger (Black henbane) protein is Spermidine synthase 2.